Reading from the N-terminus, the 106-residue chain is Small ribosomal subunit protein uS10 (106 aa).

This sequence belongs to the universal ribosomal protein uS10 family. In terms of assembly, part of the 30S ribosomal subunit.

Functionally, involved in the binding of tRNA to the ribosomes. This chain is Small ribosomal subunit protein uS10, found in Pyrobaculum islandicum (strain DSM 4184 / JCM 9189 / GEO3).